The sequence spans 397 residues: Argininosuccinate synthase (397 aa).

Position 8-16 (A8–S16) interacts with ATP. Y87 is a binding site for L-citrulline. An ATP-binding site is contributed by G117. L-aspartate-binding residues include T119, N123, and D124. N123 lines the L-citrulline pocket. Positions 127, 175, 259, and 271 each coordinate L-citrulline.

The protein belongs to the argininosuccinate synthase family. Type 1 subfamily. As to quaternary structure, homotetramer.

It localises to the cytoplasm. It catalyses the reaction L-citrulline + L-aspartate + ATP = 2-(N(omega)-L-arginino)succinate + AMP + diphosphate + H(+). It functions in the pathway amino-acid biosynthesis; L-arginine biosynthesis; L-arginine from L-ornithine and carbamoyl phosphate: step 2/3. The polypeptide is Argininosuccinate synthase (Streptomyces griseus subsp. griseus (strain JCM 4626 / CBS 651.72 / NBRC 13350 / KCC S-0626 / ISP 5235)).